We begin with the raw amino-acid sequence, 269 residues long: Nuclear egress protein 2 (269 aa).

Topologically, residues 1–247 (MSRRTYVRSE…VWKLALPVAN (247 aa)) are perinuclear space. Residues 248–268 (VTYALFIVIVLVVVLGAVLFW) form a helical membrane-spanning segment. A topological domain (nuclear) is located at residue lysine 269.

This sequence belongs to the herpesviridae NEC2 protein family. Forms a heterohexameric complex with NEC1. Phosphorylated.

It localises to the host nucleus inner membrane. Its function is as follows. Plays an essential role in virion nuclear egress, the first step of virion release from infected cell. Within the host nucleus, NEC1 interacts with the newly formed capsid through the vertexes and directs it to the inner nuclear membrane by associating with NEC2. Induces the budding of the capsid at the inner nuclear membrane as well as its envelopment into the perinuclear space. There, the NEC1/NEC2 complex promotes the fusion of the enveloped capsid with the outer nuclear membrane and the subsequent release of the viral capsid into the cytoplasm where it will reach the secondary budding sites in the host Golgi or trans-Golgi network. This is Nuclear egress protein 2 from Homo sapiens (Human).